Here is a 945-residue protein sequence, read N- to C-terminus: Leucine--tRNA ligase (945 aa).

The short motif at 66–77 is the 'HIGH' region element; that stretch reads PYPSGTGLHVGH. The 'KMSKS' region signature appears at 716-720; sequence KMGKS. Lys-719 is an ATP binding site.

The protein belongs to the class-I aminoacyl-tRNA synthetase family.

Its subcellular location is the cytoplasm. The enzyme catalyses tRNA(Leu) + L-leucine + ATP = L-leucyl-tRNA(Leu) + AMP + diphosphate. This chain is Leucine--tRNA ligase, found in Rhodococcus jostii (strain RHA1).